Reading from the N-terminus, the 64-residue chain is Large ribosomal subunit protein bL35 (64 aa).

Belongs to the bacterial ribosomal protein bL35 family.

This Shewanella halifaxensis (strain HAW-EB4) protein is Large ribosomal subunit protein bL35.